The chain runs to 603 residues: Aspartate--tRNA(Asp/Asn) ligase (603 aa).

Residue E187 coordinates L-aspartate. An aspartate region spans residues 211–214 (QQFK). L-aspartate-binding residues include R233 and H461. 233 to 235 (RDE) contacts ATP. E495 lines the ATP pocket. Position 502 (R502) interacts with L-aspartate. 547–550 (GLDR) provides a ligand contact to ATP.

It belongs to the class-II aminoacyl-tRNA synthetase family. Type 1 subfamily. In terms of assembly, homodimer.

Its subcellular location is the cytoplasm. It catalyses the reaction tRNA(Asx) + L-aspartate + ATP = L-aspartyl-tRNA(Asx) + AMP + diphosphate. Functionally, aspartyl-tRNA synthetase with relaxed tRNA specificity since it is able to aspartylate not only its cognate tRNA(Asp) but also tRNA(Asn). Reaction proceeds in two steps: L-aspartate is first activated by ATP to form Asp-AMP and then transferred to the acceptor end of tRNA(Asp/Asn). The protein is Aspartate--tRNA(Asp/Asn) ligase of Chlorobaculum parvum (strain DSM 263 / NCIMB 8327) (Chlorobium vibrioforme subsp. thiosulfatophilum).